The chain runs to 220 residues: Fibroblast growth factor 3 (220 aa).

Positions 1 to 19 (MLVIWLLLLALLPEPRVPA) are cleaved as a signal peptide. A disordered region spans residues 19 to 40 (AATASPRAPRDAGGRGGVYEHL). Residue N66 is glycosylated (N-linked (GlcNAc...) asparagine).

Belongs to the heparin-binding growth factors family.

It is found in the secreted. Functionally, plays an important role in the regulation of embryonic development, cell proliferation, and cell differentiation. The protein is Fibroblast growth factor 3 (FGF3) of Gallus gallus (Chicken).